The following is a 398-amino-acid chain: Elongation factor Tu (398 aa).

Residues 10–207 form the tr-type G domain; that stretch reads KPHVNIGTIG…TVDEYIPEPE (198 aa). The tract at residues 19-26 is G1; it reads GHVDHGKT. 19 to 26 serves as a coordination point for GTP; it reads GHVDHGKT. A Mg(2+)-binding site is contributed by threonine 26. The tract at residues 63 to 67 is G2; it reads GITIN. The G3 stretch occupies residues 84-87; the sequence is DAPG. Residues 84-88 and 139-142 each bind GTP; these read DAPGH and NKVD. Positions 139 to 142 are G4; it reads NKVD. Residues 177–179 form a G5 region; sequence SAL.

Belongs to the TRAFAC class translation factor GTPase superfamily. Classic translation factor GTPase family. EF-Tu/EF-1A subfamily. In terms of assembly, monomer.

The protein resides in the cytoplasm. The enzyme catalyses GTP + H2O = GDP + phosphate + H(+). In terms of biological role, GTP hydrolase that promotes the GTP-dependent binding of aminoacyl-tRNA to the A-site of ribosomes during protein biosynthesis. This chain is Elongation factor Tu, found in Streptococcus pneumoniae serotype 4 (strain ATCC BAA-334 / TIGR4).